A 500-amino-acid chain; its full sequence is MKKARMIVDKEYKIGEVDKRIYGSFIEHMGRAVYEGIYEPDHPEADEDGFRKDVQSLIKELQVPIIRYPGGNFLSGYNWEDGVGPVENRPRRLDLAWQTTETNEVGTNEFLSWAKKVNTEVNMAVNLGTRGIDAARNLVEYCNHPKGSYWSDLRRSHGYEQPYGIKTWCLGNEMDGPWQIGHKTADEYGRLAAETAKVMKWVDPSIELVACGSSNSGMPTFIDWEAKVLEHTYEHVDYISLHTYYGNRDNNLPNYLARSMDLDHFIKSVAATCDYVKAKTRSKKTINLSLDEWNVWYHSNEADKKVEPWITARPILEDIYNFEDALLVGSLLITMLQHADRVKIACLAQLVNVIAPIMTEKGGEAWRQPIFYPYMHASVYGRGESLKPLISSPKYDCSDFTDVPYVDAAVVYSEEEETLTIFAVNKAEDQMETEISLRGFESYQIAEHIVLEHQDIKATNQHNRKNVVPHSNGSSSVSENGLTAHFTPLSWNVIRLKKQS.

Alpha-L-arabinofuranose-binding residues include glutamate 27, asparagine 72, and asparagine 172. Catalysis depends on glutamate 173, which acts as the Proton donor/acceptor. Alpha-L-arabinofuranose contacts are provided by tyrosine 244, glutamate 292, and glutamine 349. Glutamate 292 (nucleophile) is an active-site residue.

This sequence belongs to the glycosyl hydrolase 51 family. Homohexamer; trimer of dimers.

Its subcellular location is the cytoplasm. It catalyses the reaction Hydrolysis of terminal non-reducing alpha-L-arabinofuranoside residues in alpha-L-arabinosides.. It carries out the reaction (20S)-ginsenoside Rc + H2O = L-arabinofuranose + (20S)-ginsenoside Rd. The protein operates within glycan metabolism; L-arabinan degradation. Its activity is regulated as follows. At a concentration of 5 mM, K(+), Cu(2+) and Ni(2+) exhibit inhibitory effects on the activity. Additionally, the chemical reagent SDS also displays a certain degree of inhibition. Enzymatic activity is largely unaffected by product feedback inhibition. Involved in the degradation of arabinan and is a key enzyme in the complete degradation of the plant cell wall. Catalyzes the cleavage of terminal alpha-(1-&gt;5)-arabinofuranosyl bonds in different hemicellulosic homopolysaccharides (branched and debranched arabinans). It acts preferentially on arabinotriose, arabinobiose and linear alpha-(1-&gt;5)-L-arabinan, and is much less effective on branched sugar beet arabinan. When expressed in E.coli, the recombinant enyzme can hydrolyze, with relatively low catalytic efficiency, the terminal alpha-L-arabinofuranoside at the C20 position of ginsenoside Rc to produce ginsenoside Rd, a rare ginsenoside that exhibits diverse and powerful pharmacological activities. The polypeptide is Intracellular exo-alpha-(1-&gt;5)-L-arabinofuranosidase 1 (Bacillus subtilis (strain 168)).